We begin with the raw amino-acid sequence, 79 residues long: Acyl carrier protein (79 aa).

Residues 2–77 (STIEERVKKI…QAIDYVKVHV (76 aa)) enclose the Carrier domain. Ser37 carries the post-translational modification O-(pantetheine 4'-phosphoryl)serine.

Belongs to the acyl carrier protein (ACP) family. In terms of processing, 4'-phosphopantetheine is transferred from CoA to a specific serine of apo-ACP by AcpS. This modification is essential for activity because fatty acids are bound in thioester linkage to the sulfhydryl of the prosthetic group.

The protein resides in the cytoplasm. It participates in lipid metabolism; fatty acid biosynthesis. Its function is as follows. Carrier of the growing fatty acid chain in fatty acid biosynthesis. The protein is Acyl carrier protein of Xanthomonas albilineans.